Here is a 439-residue protein sequence, read N- to C-terminus: GTPase Obg (439 aa).

The 160-residue stretch at 5–164 (TDFFDQATIV…LTLELELKML (160 aa)) folds into the Obg domain. Positions 165–335 (ADVGLVGFPN…LLQRVAELLR (171 aa)) constitute an OBG-type G domain. GTP is bound by residues 171–178 (GFPNAGKS), 196–200 (FTTLT), 217–220 (DIPG), 287–290 (NKAD), and 316–318 (SAA). Residues serine 178 and threonine 198 each contribute to the Mg(2+) site. The interval 337 to 359 (DPPPQRDPVDPDEPPLEWPLPPV) is disordered. The OCT domain occupies 356–433 (LPPVDENAFT…IGRAELVWDD (78 aa)).

The protein belongs to the TRAFAC class OBG-HflX-like GTPase superfamily. OBG GTPase family. As to quaternary structure, monomer. Requires Mg(2+) as cofactor.

The protein localises to the cytoplasm. In terms of biological role, an essential GTPase which binds GTP, GDP and possibly (p)ppGpp with moderate affinity, with high nucleotide exchange rates and a fairly low GTP hydrolysis rate. Plays a role in control of the cell cycle, stress response, ribosome biogenesis and in those bacteria that undergo differentiation, in morphogenesis control. This is GTPase Obg from Chloroflexus aggregans (strain MD-66 / DSM 9485).